Reading from the N-terminus, the 341-residue chain is UDP-glucose 4-epimerase (341 aa).

This sequence belongs to the polysaccharide synthase family.

It carries out the reaction UDP-alpha-D-glucose = UDP-alpha-D-galactose. Its function is as follows. Epimerizes UDP-galactose to UDP-glucose. In Rickettsia massiliae (strain Mtu5), this protein is UDP-glucose 4-epimerase (capD).